Here is a 456-residue protein sequence, read N- to C-terminus: Na(+)/H(+) antiporter NhaA 3 (456 aa).

11 helical membrane passes run 32-52 (IEAT…TLSN), 87-107 (GLMT…VVLG), 114-134 (MVAL…GLYL), 145-165 (GWGV…ALLG), 174-194 (VFLL…VAVG), 202-222 (TALA…LLGV), 233-253 (AIIW…GVIL), 318-338 (WVAF…PITI), 347-367 (LAVM…FAWL), 382-402 (WGGL…ALFI), and 417-437 (LGIL…LCAL).

It belongs to the NhaA Na(+)/H(+) (TC 2.A.33) antiporter family.

It is found in the cell inner membrane. It carries out the reaction Na(+)(in) + 2 H(+)(out) = Na(+)(out) + 2 H(+)(in). Its function is as follows. Na(+)/H(+) antiporter that extrudes sodium in exchange for external protons. This chain is Na(+)/H(+) antiporter NhaA 3, found in Acidiphilium cryptum (strain JF-5).